The chain runs to 59 residues: Protein translocase subunit SecE (59 aa).

Residues 37 to 57 (LIVLLFVGLLAFLVQLAFSIL) traverse the membrane as a helical segment.

This sequence belongs to the SecE/SEC61-gamma family. In terms of assembly, component of the Sec protein translocase complex. Heterotrimer consisting of SecY (alpha), SecG (beta) and SecE (gamma) subunits. The heterotrimers can form oligomers, although 1 heterotrimer is thought to be able to translocate proteins. Interacts with the ribosome. May interact with SecDF, and other proteins may be involved.

Its subcellular location is the cell membrane. In terms of biological role, essential subunit of the Sec protein translocation channel SecYEG. Clamps together the 2 halves of SecY. May contact the channel plug during translocation. This Metallosphaera sedula (strain ATCC 51363 / DSM 5348 / JCM 9185 / NBRC 15509 / TH2) protein is Protein translocase subunit SecE.